The following is a 69-amino-acid chain: Cell division protein ZapB (69 aa).

Residues 3 to 60 (LELFNQLEQKVQNAVETIEMLKMEAEELREENTRLKQERDEWERRLNGLLGKFQEIED) adopt a coiled-coil conformation.

This sequence belongs to the ZapB family. Homodimer. The ends of the coiled-coil dimer bind to each other, forming polymers. Interacts with FtsZ.

Its subcellular location is the cytoplasm. Non-essential, abundant cell division factor that is required for proper Z-ring formation. It is recruited early to the divisome by direct interaction with FtsZ, stimulating Z-ring assembly and thereby promoting cell division earlier in the cell cycle. Its recruitment to the Z-ring requires functional FtsA or ZipA. This chain is Cell division protein ZapB, found in Chromohalobacter salexigens (strain ATCC BAA-138 / DSM 3043 / CIP 106854 / NCIMB 13768 / 1H11).